The sequence spans 100 residues: Urease subunit gamma (100 aa).

This sequence belongs to the urease gamma subunit family. In terms of assembly, heterotrimer of UreA (gamma), UreB (beta) and UreC (alpha) subunits. Three heterotrimers associate to form the active enzyme.

It is found in the cytoplasm. The catalysed reaction is urea + 2 H2O + H(+) = hydrogencarbonate + 2 NH4(+). The protein operates within nitrogen metabolism; urea degradation; CO(2) and NH(3) from urea (urease route): step 1/1. The sequence is that of Urease subunit gamma from Ralstonia nicotianae (strain ATCC BAA-1114 / GMI1000) (Ralstonia solanacearum).